The following is a 388-amino-acid chain: Chorismate synthase (388 aa).

Residues R39 and R45 each contribute to the NADP(+) site. Residues 130–132 (RSS), 251–252 (NA), G296, 311–315 (KPIPT), and R337 each bind FMN.

Belongs to the chorismate synthase family. Homotetramer. The cofactor is FMNH2.

It catalyses the reaction 5-O-(1-carboxyvinyl)-3-phosphoshikimate = chorismate + phosphate. Its pathway is metabolic intermediate biosynthesis; chorismate biosynthesis; chorismate from D-erythrose 4-phosphate and phosphoenolpyruvate: step 7/7. In terms of biological role, catalyzes the anti-1,4-elimination of the C-3 phosphate and the C-6 proR hydrogen from 5-enolpyruvylshikimate-3-phosphate (EPSP) to yield chorismate, which is the branch point compound that serves as the starting substrate for the three terminal pathways of aromatic amino acid biosynthesis. This reaction introduces a second double bond into the aromatic ring system. This is Chorismate synthase from Geobacillus sp. (strain WCH70).